The following is a 454-amino-acid chain: Mitochondrial distribution and morphology protein 10 (454 aa).

Belongs to the MDM10 family. In terms of assembly, component of the ER-mitochondria encounter structure (ERMES) or MDM complex, composed of MMM1, MDM10, MDM12 and MDM34. Associates with the mitochondrial outer membrane sorting assembly machinery SAM(core) complex.

It localises to the mitochondrion outer membrane. Its function is as follows. Component of the ERMES/MDM complex, which serves as a molecular tether to connect the endoplasmic reticulum and mitochondria. Components of this complex are involved in the control of mitochondrial shape and protein biogenesis and may function in phospholipid exchange. MDM10 is involved in the late assembly steps of the general translocase of the mitochondrial outer membrane (TOM complex). Functions in the TOM40-specific route of the assembly of outer membrane beta-barrel proteins, including the association of TOM40 with the receptor TOM22 and small TOM proteins. Can associate with the SAM(core) complex as well as the MDM12-MMM1 complex, both involved in late steps of the major beta-barrel assembly pathway, that is responsible for biogenesis of all outer membrane beta-barrel proteins. May act as a switch that shuttles between both complexes and channels precursor proteins into the TOM40-specific pathway. Plays a role in mitochondrial morphology and in the inheritance of mitochondria. The chain is Mitochondrial distribution and morphology protein 10 from Candida tropicalis (strain ATCC MYA-3404 / T1) (Yeast).